Reading from the N-terminus, the 244-residue chain is DNA polymerase sliding clamp (244 aa).

It belongs to the PCNA family. Homotrimer. The subunits circularize to form a toroid; DNA passes through its center. Replication factor C (RFC) is required to load the toroid on the DNA.

Its function is as follows. Sliding clamp subunit that acts as a moving platform for DNA processing. Responsible for tethering the catalytic subunit of DNA polymerase and other proteins to DNA during high-speed replication. This chain is DNA polymerase sliding clamp, found in Methanobrevibacter smithii (strain ATCC 35061 / DSM 861 / OCM 144 / PS).